The primary structure comprises 291 residues: Taste receptor type 2 member 16 (291 aa).

M1 is a topological domain (extracellular). Residues 2–22 (IPIQLTVFFMIIYVLESLTII) form a helical membrane-spanning segment. At 23–41 (VQSSLIVAVLGREWLQVRR) the chain is on the cytoplasmic side. A helical transmembrane segment spans residues 42–62 (LMPVDMILISLGISRFCLQWA). Residues 63–84 (SMLNBFCSYFNLNYVLCNLTIT) lie on the Extracellular side of the membrane. N-linked (GlcNAc...) asparagine glycosylation is present at N80. The chain crosses the membrane as a helical span at residues 85–105 (WEFFNILTFWLNSLLTVFYCI). At 106–125 (KVSSFTHHIFLWLRWRILRL) the chain is on the cytoplasmic side. Residues 126 to 146 (FPWILLGSLMITCVTIIPSAI) form a helical membrane-spanning segment. Residues 147-182 (GNYIQIQLLTMEHLPRNSTVTDKLEKFHQYEFQAHT) lie on the Extracellular side of the membrane. N-linked (GlcNAc...) asparagine glycosylation is present at N163. The helical transmembrane segment at 183–203 (VALVIPFILFLASTILLMASL) threads the bilayer. The Cytoplasmic segment spans residues 204 to 228 (TKQIQHHSTGHCNPSMKAHFTALRS). A helical transmembrane segment spans residues 229-249 (LAVLFIVFTSYFLTILITIIG). Residues 250 to 257 (TLFDRRCW) lie on the Extracellular side of the membrane. A helical transmembrane segment spans residues 258–278 (LWVWEAFVYAFILMHSTSLML). Residues 279-291 (SSPTLKRILKGKC) are Cytoplasmic-facing.

This sequence belongs to the G-protein coupled receptor T2R family. In terms of assembly, interacts with RTP3 and RTP4.

It is found in the cell membrane. Receptor that may play a role in the perception of bitterness and is gustducin-linked. May play a role in sensing the chemical composition of the gastrointestinal content. The activity of this receptor may stimulate alpha gustducin, mediate PLC-beta-2 activation and lead to the gating of TRPM5. The chain is Taste receptor type 2 member 16 (TAS2R16) from Gorilla gorilla gorilla (Western lowland gorilla).